The chain runs to 208 residues: GTP cyclohydrolase 1 (208 aa).

Zn(2+) is bound by residues cysteine 89, histidine 92, and cysteine 163.

The protein belongs to the GTP cyclohydrolase I family. Homomer.

The catalysed reaction is GTP + H2O = 7,8-dihydroneopterin 3'-triphosphate + formate + H(+). It functions in the pathway cofactor biosynthesis; 7,8-dihydroneopterin triphosphate biosynthesis; 7,8-dihydroneopterin triphosphate from GTP: step 1/1. This is GTP cyclohydrolase 1 from Saccharolobus islandicus (strain L.S.2.15 / Lassen #1) (Sulfolobus islandicus).